A 296-amino-acid polypeptide reads, in one-letter code: Acetylglutamate kinase (296 aa).

Substrate is bound by residues 67–68 (GG), arginine 89, and asparagine 194.

The protein belongs to the acetylglutamate kinase family. ArgB subfamily.

The protein localises to the cytoplasm. It carries out the reaction N-acetyl-L-glutamate + ATP = N-acetyl-L-glutamyl 5-phosphate + ADP. The protein operates within amino-acid biosynthesis; L-arginine biosynthesis; N(2)-acetyl-L-ornithine from L-glutamate: step 2/4. Its function is as follows. Catalyzes the ATP-dependent phosphorylation of N-acetyl-L-glutamate. This is Acetylglutamate kinase from Brucella anthropi (strain ATCC 49188 / DSM 6882 / CCUG 24695 / JCM 21032 / LMG 3331 / NBRC 15819 / NCTC 12168 / Alc 37) (Ochrobactrum anthropi).